The primary structure comprises 397 residues: MMTKNERRQPSWPMIAGVAAAAALVGFGAARGLGSPSGAEVSKLAAAPEKAAASAPAAEPAEVRIPGEYLAAANIAVEPVSAGGVGSVLLAPASVAAVPGSEAVIASRAAGAVLRIQRKLGDAVRAGDVLALVDSPEAAAMAAERKVAQARADLARKTYERESSLFQQGVTPRQEMESARIALDVAQAEVQRAATVAQAAKVSSDGRSVAVVSPIAGRITAQSVTLGAYVAPQAELFRVAGSGAVQVEAYVTAADTSRIAAGSDATIVLANGAPLAGRVQAVTPTVSGSARAATVVVTPVDANSGLIVGEGVQVRLHTKAADANAMSVPEDAVQNLDGRDVVFVRTQQGFRPKSVLVGSRSGGVAQILSGVKPGEQVATRNAFLIKAEMNKAGGDDE.

Residues 10 to 30 form a helical membrane-spanning segment; it reads PSWPMIAGVAAAAALVGFGAA. A coiled-coil region spans residues 137–195; it reads EAAAMAAERKVAQARADLARKTYERESSLFQQGVTPRQEMESARIALDVAQAEVQRAAT.

The protein belongs to the membrane fusion protein (MFP) (TC 8.A.1) family.

Its subcellular location is the cell inner membrane. Its function is as follows. Component of the NCC cation efflux system that confers resistance to nickel, cobalt and cadmium. This Alcaligenes xylosoxydans xylosoxydans (Achromobacter xylosoxidans) protein is Nickel-cobalt-cadmium resistance protein NccB (nccB).